The sequence spans 194 residues: Peptidyl-tRNA hydrolase (194 aa).

Tyr17 serves as a coordination point for tRNA. Residue His22 is the Proton acceptor of the active site. Positions 68, 70, and 116 each coordinate tRNA.

Belongs to the PTH family. Monomer.

Its subcellular location is the cytoplasm. The enzyme catalyses an N-acyl-L-alpha-aminoacyl-tRNA + H2O = an N-acyl-L-amino acid + a tRNA + H(+). Functionally, hydrolyzes ribosome-free peptidyl-tRNAs (with 1 or more amino acids incorporated), which drop off the ribosome during protein synthesis, or as a result of ribosome stalling. In terms of biological role, catalyzes the release of premature peptidyl moieties from peptidyl-tRNA molecules trapped in stalled 50S ribosomal subunits, and thus maintains levels of free tRNAs and 50S ribosomes. In Actinobacillus pleuropneumoniae serotype 7 (strain AP76), this protein is Peptidyl-tRNA hydrolase.